The following is a 372-amino-acid chain: 4-hydroxy-3-methylbut-2-en-1-yl diphosphate synthase (flavodoxin) (372 aa).

Cys-270, Cys-273, Cys-305, and Glu-312 together coordinate [4Fe-4S] cluster.

The protein belongs to the IspG family. It depends on [4Fe-4S] cluster as a cofactor.

The enzyme catalyses (2E)-4-hydroxy-3-methylbut-2-enyl diphosphate + oxidized [flavodoxin] + H2O + 2 H(+) = 2-C-methyl-D-erythritol 2,4-cyclic diphosphate + reduced [flavodoxin]. The protein operates within isoprenoid biosynthesis; isopentenyl diphosphate biosynthesis via DXP pathway; isopentenyl diphosphate from 1-deoxy-D-xylulose 5-phosphate: step 5/6. In terms of biological role, converts 2C-methyl-D-erythritol 2,4-cyclodiphosphate (ME-2,4cPP) into 1-hydroxy-2-methyl-2-(E)-butenyl 4-diphosphate. This is 4-hydroxy-3-methylbut-2-en-1-yl diphosphate synthase (flavodoxin) from Salmonella typhi.